Reading from the N-terminus, the 185-residue chain is Elongation factor P (185 aa).

The protein belongs to the elongation factor P family.

The protein localises to the cytoplasm. Its pathway is protein biosynthesis; polypeptide chain elongation. Functionally, involved in peptide bond synthesis. Stimulates efficient translation and peptide-bond synthesis on native or reconstituted 70S ribosomes in vitro. Probably functions indirectly by altering the affinity of the ribosome for aminoacyl-tRNA, thus increasing their reactivity as acceptors for peptidyl transferase. This is Elongation factor P from Desulfitobacterium hafniense (strain DSM 10664 / DCB-2).